Consider the following 275-residue polypeptide: Ribosomal RNA small subunit methyltransferase A (275 aa).

S-adenosyl-L-methionine is bound by residues Asn-19, Leu-21, Gly-46, Glu-71, Asp-94, and Asn-117.

It belongs to the class I-like SAM-binding methyltransferase superfamily. rRNA adenine N(6)-methyltransferase family. RsmA subfamily.

It is found in the cytoplasm. It catalyses the reaction adenosine(1518)/adenosine(1519) in 16S rRNA + 4 S-adenosyl-L-methionine = N(6)-dimethyladenosine(1518)/N(6)-dimethyladenosine(1519) in 16S rRNA + 4 S-adenosyl-L-homocysteine + 4 H(+). Its function is as follows. Specifically dimethylates two adjacent adenosines (A1518 and A1519) in the loop of a conserved hairpin near the 3'-end of 16S rRNA in the 30S particle. May play a critical role in biogenesis of 30S subunits. In Burkholderia pseudomallei (strain 668), this protein is Ribosomal RNA small subunit methyltransferase A.